The primary structure comprises 182 residues: Proline-rich protein, Y-linked (182 aa).

Disordered stretches follow at residues 1–22 (MMRR…KPRD) and 89–108 (VPAD…PPPG). Residues 91–108 (ADPPPASPYRTSPRPPPG) show a composition bias toward pro residues. The region spanning 154–167 (WMKLETIILSKLSQ) is the DUF1725 domain.

The sequence is that of Proline-rich protein, Y-linked (PRORY) from Homo sapiens (Human).